The sequence spans 582 residues: Membrane protein insertase YidC (582 aa).

Residues 3–23 form a helical membrane-spanning segment; sequence IQRALVITGIAVVSYLMIQAW. The disordered stretch occupies residues 38–92; sequence QVAEQGNSSSSDSADLPSVQSQTDNSIPSAQSDNDLPSVSPADIAQPTPSSQRIE. Residues 45 to 58 show a composition bias toward low complexity; it reads SSSSDSADLPSVQS. The segment covering 59-74 has biased composition (polar residues); the sequence is QTDNSIPSAQSDNDLP. 5 helical membrane-spanning segments follow: residues 357–377, 394–414, 464–484, 495–515, and 541–561; these read TVDY…LVFL, GVGN…AIFF, LGGC…YYVL, FFLW…PILM, and MPMI…LYWL.

It belongs to the OXA1/ALB3/YidC family. Type 1 subfamily. In terms of assembly, interacts with the Sec translocase complex via SecD. Specifically interacts with transmembrane segments of nascent integral membrane proteins during membrane integration.

Its subcellular location is the cell inner membrane. Functionally, required for the insertion and/or proper folding and/or complex formation of integral membrane proteins into the membrane. Involved in integration of membrane proteins that insert both dependently and independently of the Sec translocase complex, as well as at least some lipoproteins. Aids folding of multispanning membrane proteins. This Alcanivorax borkumensis (strain ATCC 700651 / DSM 11573 / NCIMB 13689 / SK2) protein is Membrane protein insertase YidC.